A 307-amino-acid chain; its full sequence is 1D-myo-inositol 2-acetamido-2-deoxy-alpha-D-glucopyranoside deacetylase 1 (307 aa).

Zn(2+) is bound by residues histidine 21, aspartate 24, and histidine 157.

Belongs to the MshB deacetylase family. Requires Zn(2+) as cofactor.

The catalysed reaction is 1D-myo-inositol 2-acetamido-2-deoxy-alpha-D-glucopyranoside + H2O = 1D-myo-inositol 2-amino-2-deoxy-alpha-D-glucopyranoside + acetate. Its function is as follows. Catalyzes the deacetylation of 1D-myo-inositol 2-acetamido-2-deoxy-alpha-D-glucopyranoside (GlcNAc-Ins) in the mycothiol biosynthesis pathway. This Frankia casuarinae (strain DSM 45818 / CECT 9043 / HFP020203 / CcI3) protein is 1D-myo-inositol 2-acetamido-2-deoxy-alpha-D-glucopyranoside deacetylase 1.